We begin with the raw amino-acid sequence, 767 residues long: U3 small nucleolar RNA-associated protein 14 homolog A (767 aa).

The interval 23–49 (TSNYPLSASEDEGDSDGERKHQKLLEA) is disordered. Residues Ser-29, Ser-31, Ser-37, Ser-52, Ser-77, and Ser-81 each carry the phosphoserine modification. A Glycyl lysine isopeptide (Lys-Gly) (interchain with G-Cter in SUMO2) cross-link involves residue Lys-122. Thr-205 is subject to Phosphothreonine. Residues 317-346 (LEARQAMQEQLAKNKELTQKLQVVSESEEE) adopt a coiled-coil conformation. The disordered stretch occupies residues 338–554 (QVVSESEEEG…SKGKNKKEQM (217 aa)). Over residues 342-355 (ESEEEGGADEEEAL) the composition is skewed to acidic residues. Positions 398-433 (AAHEFPENEENDKPVAEEDELLKELEKRRSLRKRSE) are enriched in basic and acidic residues. Arg-431 carries the post-translational modification Citrulline. Lys-447 is covalently cross-linked (Glycyl lysine isopeptide (Lys-Gly) (interchain with G-Cter in SUMO2)). Ser-451 carries the post-translational modification Phosphoserine. Residues 486-498 (VWEEEPAPEEDEP) are compositionally biased toward acidic residues. Over residues 503–538 (RPERMRTLEELEELGKEDSLPNKERPRPSVEGEQVR) the composition is skewed to basic and acidic residues. A Glycyl lysine isopeptide (Lys-Gly) (interchain with G-Cter in SUMO2) cross-link involves residue Lys-518. At Arg-586 the chain carries Citrulline. Residues 730–767 (TAEDVDCRSSPRSDVPVMQSNPKQHSKHQKQRKKSSIG) form a disordered region. The segment covering 753–767 (QHSKHQKQRKKSSIG) has biased composition (basic residues).

It belongs to the UTP14 family. In terms of assembly, interacts with DHX37. In terms of processing, citrullinated by PADI4. Ubiquitously expressed.

Its subcellular location is the nucleus. The protein localises to the nucleolus. In terms of biological role, may be required for ribosome biogenesis. This Mus musculus (Mouse) protein is U3 small nucleolar RNA-associated protein 14 homolog A (Utp14a).